The primary structure comprises 143 residues: Ribosome-binding factor A (143 aa).

Basic and acidic residues predominate over residues 116 to 128 (SDDEAKQKQHGDQ). A disordered region spans residues 116-143 (SDDEAKQKQHGDQQDVSQSSDDKSEGED).

This sequence belongs to the RbfA family. As to quaternary structure, monomer. Binds 30S ribosomal subunits, but not 50S ribosomal subunits or 70S ribosomes.

The protein localises to the cytoplasm. Its function is as follows. One of several proteins that assist in the late maturation steps of the functional core of the 30S ribosomal subunit. Associates with free 30S ribosomal subunits (but not with 30S subunits that are part of 70S ribosomes or polysomes). Required for efficient processing of 16S rRNA. May interact with the 5'-terminal helix region of 16S rRNA. In Shewanella sediminis (strain HAW-EB3), this protein is Ribosome-binding factor A.